A 381-amino-acid chain; its full sequence is MSRLQFQLQATDGHARRGRLTFPRGTVETPAFMPVGTYGSVKGILPEQIRALGAEIILGNTFHLYLRPGLEVIGDHGGLHGFARWDGPILTDSGGFQVFSLAHRRKITEQGVTFSSPTDGARVFLGPEESMKIQKVLDSDIVMIFDECTPYPATEDVARRSMELSLRWAQRSRDAHDGLGNDAALFGIVQGGVHPDLRSRSLDGLQGIGFDGYAIGGLAVGEPEHERNAMLEHLHPRLPAERPRYLMGVGRPEDLVEGVARGVDMFDCVMPTRNARNGHYFTSFGTVRIRNAKYERDLDTIEPGCGCHACSSGYTRAYLRHLDRCNEMLAPMLGTLHNLCYYEKLMADMRAAIASGTFVEFRRSFYAARGATTPPLPGETS.

The Proton acceptor role is filled by D92. Substrate-binding positions include 92 to 96 (DSGGF), D146, Q190, and G217. The segment at 248-254 (GVGRPED) is RNA binding. D267 (nucleophile) is an active-site residue. The tract at residues 272–276 (TRNAR) is RNA binding; important for wobble base 34 recognition. Zn(2+)-binding residues include C305, C307, C310, and H337.

Belongs to the queuine tRNA-ribosyltransferase family. Homodimer. Within each dimer, one monomer is responsible for RNA recognition and catalysis, while the other monomer binds to the replacement base PreQ1. Zn(2+) is required as a cofactor.

It catalyses the reaction 7-aminomethyl-7-carbaguanine + guanosine(34) in tRNA = 7-aminomethyl-7-carbaguanosine(34) in tRNA + guanine. Its pathway is tRNA modification; tRNA-queuosine biosynthesis. In terms of biological role, catalyzes the base-exchange of a guanine (G) residue with the queuine precursor 7-aminomethyl-7-deazaguanine (PreQ1) at position 34 (anticodon wobble position) in tRNAs with GU(N) anticodons (tRNA-Asp, -Asn, -His and -Tyr). Catalysis occurs through a double-displacement mechanism. The nucleophile active site attacks the C1' of nucleotide 34 to detach the guanine base from the RNA, forming a covalent enzyme-RNA intermediate. The proton acceptor active site deprotonates the incoming PreQ1, allowing a nucleophilic attack on the C1' of the ribose to form the product. After dissociation, two additional enzymatic reactions on the tRNA convert PreQ1 to queuine (Q), resulting in the hypermodified nucleoside queuosine (7-(((4,5-cis-dihydroxy-2-cyclopenten-1-yl)amino)methyl)-7-deazaguanosine). The protein is Queuine tRNA-ribosyltransferase of Xanthomonas euvesicatoria pv. vesicatoria (strain 85-10) (Xanthomonas campestris pv. vesicatoria).